We begin with the raw amino-acid sequence, 615 residues long: DNA mismatch repair protein MutL (615 aa).

The segment at 362 to 397 is disordered; sequence HFAEPAVREPVAPRYSPAPASGGRPAASWPNAQPGY. Low complexity predominate over residues 378–391; the sequence is PAPASGGRPAASWP.

It belongs to the DNA mismatch repair MutL/HexB family.

Functionally, this protein is involved in the repair of mismatches in DNA. It is required for dam-dependent methyl-directed DNA mismatch repair. May act as a 'molecular matchmaker', a protein that promotes the formation of a stable complex between two or more DNA-binding proteins in an ATP-dependent manner without itself being part of a final effector complex. The sequence is that of DNA mismatch repair protein MutL from Escherichia fergusonii (strain ATCC 35469 / DSM 13698 / CCUG 18766 / IAM 14443 / JCM 21226 / LMG 7866 / NBRC 102419 / NCTC 12128 / CDC 0568-73).